The sequence spans 364 residues: Inner membrane ABC transporter permease protein YejB (364 aa).

Residues 1–8 (MGAYLIRR) lie on the Periplasmic side of the membrane. The chain crosses the membrane as a helical span at residues 9 to 29 (LLLVIPTLWAIITINFFIVQI). Residues 30-37 (APGGPVDQ) lie on the Cytoplasmic side of the membrane. Residues 38-58 (AIAAIEFGNAGVLPGAGGEGV) form a helical membrane-spanning segment. Topologically, residues 59–135 (RASHAQTGVG…LTLIKDSLPV (77 aa)) are periplasmic. The ABC transmembrane type-1 domain occupies 133-348 (LPVSITLGLW…LIGLLLNIVS (216 aa)). Residues 136 to 156 (SITLGLWSTLIIYLVSIPLGI) traverse the membrane as a helical segment. Topologically, residues 157–172 (RKAVYNGSRFDVWSSA) are cytoplasmic. Residues 173–193 (FIIIGYAIPAFLFAILLIVFF) form a helical membrane-spanning segment. At 194–224 (AGGSYFDLFPLRGLVSANFDSLPWYQKITDY) the chain is on the periplasmic side. A helical transmembrane segment spans residues 225–245 (LWHITLPVLATVIGGFAALTM). Residues 246 to 284 (LTKNSFLDEVRKQYVVTARAKGVSEKNILWKHVFRNAML) lie on the Cytoplasmic side of the membrane. Residues 285 to 305 (LVIAGFPATFISMFFTGSLLI) form a helical membrane-spanning segment. Over 306-326 (EVMFSLNGLGLLGYEATVSRD) the chain is Periplasmic. A helical membrane pass occupies residues 327 to 347 (YPVMFGTLYIFTLIGLLLNIV). Residues 348–364 (SDISYTLVDPRIDFEGR) lie on the Cytoplasmic side of the membrane.

Belongs to the binding-protein-dependent transport system permease family. OppBC subfamily.

The protein localises to the cell inner membrane. In terms of biological role, probably part of a binding-protein-dependent transport system. Probably responsible for the translocation of the substrate across the membrane. The chain is Inner membrane ABC transporter permease protein YejB (yejB) from Escherichia coli O157:H7.